Consider the following 315-residue polypeptide: Aspartate carbamoyltransferase catalytic subunit (315 aa).

2 residues coordinate carbamoyl phosphate: Arg-64 and Thr-65. Lys-93 contributes to the L-aspartate binding site. Carbamoyl phosphate contacts are provided by Arg-114, His-142, and Gln-145. L-aspartate contacts are provided by Arg-175 and Arg-237. 2 residues coordinate carbamoyl phosphate: Leu-276 and Pro-277.

Belongs to the aspartate/ornithine carbamoyltransferase superfamily. ATCase family. In terms of assembly, heterooligomer of catalytic and regulatory chains.

It catalyses the reaction carbamoyl phosphate + L-aspartate = N-carbamoyl-L-aspartate + phosphate + H(+). It participates in pyrimidine metabolism; UMP biosynthesis via de novo pathway; (S)-dihydroorotate from bicarbonate: step 2/3. Functionally, catalyzes the condensation of carbamoyl phosphate and aspartate to form carbamoyl aspartate and inorganic phosphate, the committed step in the de novo pyrimidine nucleotide biosynthesis pathway. The polypeptide is Aspartate carbamoyltransferase catalytic subunit (Thermofilum pendens (strain DSM 2475 / Hrk 5)).